The sequence spans 243 residues: Large ribosomal subunit protein uL2 (243 aa).

Positions 202–243 (HGGGRHQHVGQSSTVSRNAPPGAKVGSIAARKTGRAKIKDRR) are disordered. The segment covering 233-243 (KTGRAKIKDRR) has biased composition (basic residues).

It belongs to the universal ribosomal protein uL2 family. Part of the 50S ribosomal subunit. Forms a bridge to the 30S subunit in the 70S ribosome.

In terms of biological role, one of the primary rRNA binding proteins. Required for association of the 30S and 50S subunits to form the 70S ribosome, for tRNA binding and peptide bond formation. It has been suggested to have peptidyltransferase activity; this is somewhat controversial. Makes several contacts with the 16S rRNA in the 70S ribosome. This chain is Large ribosomal subunit protein uL2, found in Cenarchaeum symbiosum (strain A).